A 610-amino-acid chain; its full sequence is MSAVNGLVPSTIFDRINSDMDVSEEMEEIREVLYEMIKTNFPMGVAATHLSEKYHEEFVSKGLGRELPEDWIQQVTAAEEFEAQTRGPITILFVRLSNTSSFKRPPINSVNVRVISTDREPTADELKKIKQRKENEPTEHAKTLSQQSVALKEGSTVSIVYADSPKRFFIRALADDDQYEKIGTTLAEIYAQETPPSALDSRVAIYEIVAGGAYALQDSNGTWFRVIAKQPPQSGQVMCHFVDVGVCEKFPVAAIRLLPPAVHPVMSIGSMAREVRMDVSEEESLRLNNKFVDLTFETKDDGIQVPINLTLSKFDSSDSESLPVVDLQSSDGLSITEFLKKPSGVVRLSTPTKTTSPITPASASTSSLTCLFDKPATIQPMTVAQMPMSAFPANAIFAAGPTDISLRQLSLDPMPDYMYAKLKDECALPDSQLESSPDFGGFYAAFIDDRWERVQCIRASKIDKQAYCVYLLDVGAFQYVRKEAMRRLNSTSPFKKMLMFKCKIGGIKPVAGGEVWSRESHEAVREFFEAACGEPVVVEPTQPGWSQWKQLNAPAVPTCEARLSCCGRDIGDWLIACGLALPINAPIPSPNSQSLLTFVPTPINIVGRNI.

2 consecutive Tudor domains span residues 149 to 260 (VALK…LLPP) and 386 to 506 (MPMS…KIGG).

This is Putative protein tag-250 (tag-250) from Caenorhabditis elegans.